Consider the following 392-residue polypeptide: Copper-containing nitrite reductase (392 aa).

An N-terminal signal peptide occupies residues 1-18; sequence MKRQALAAMIASLFALAA. A lipid anchor (N-palmitoyl cysteine) is attached at C19. The S-diacylglycerol cysteine moiety is linked to residue C19. The tract at residues 30-49 is disordered; the sequence is ETPAASAEAASSAAQATAET. Plastocyanin-like domains are found at residues 101–195 and 245–346; these read WTFD…ILVE and GHVG…LKVE. The Cu cation site is built by H134, H139, H174, C175, H183, and M188. H139 contacts substrate. A substrate-binding site is contributed by H280. H329 lines the Cu cation pocket. The disordered stretch occupies residues 367-392; it reads GAASAPAASAPAASAPAASASEKSVY. A run of 4 repeats spans residues 368–372, 373–377, 378–382, and 383–387. A 4 X 5 AA tandem repeats of A-A-S-A-P region spans residues 368–387; it reads AASAPAASAPAASAPAASAS.

Belongs to the multicopper oxidase family. As to quaternary structure, homotrimer. It depends on Cu(+) as a cofactor. Cu(2+) serves as cofactor. Palmitoylated.

It is found in the cell outer membrane. The enzyme catalyses nitric oxide + Fe(III)-[cytochrome c] + H2O = Fe(II)-[cytochrome c] + nitrite + 2 H(+). Its function is as follows. Catalyzes the reduction of nitrite to nitric oxide (NO), probably with azurin as electron donor. Essential for growth and survival in oxygen-depleted environments. Can also provide protection against killing by normal human sera. The polypeptide is Copper-containing nitrite reductase (aniA) (Neisseria gonorrhoeae).